The sequence spans 278 residues: HAUS augmin-like complex subunit 1 (278 aa).

3 coiled-coil regions span residues 49–79 (RDVY…LMES), 124–177 (SDLF…KVDN), and 249–277 (SLAQ…DMME).

The protein belongs to the HAUS1 family. In terms of assembly, component of the HAUS augmin-like complex. The complex interacts with the gamma-tubulin ring complex and this interaction is required for spindle assembly. Associates with microtubules. The interaction with microtubules is strong during mitosis, while it is weak or absent during interphase. It is unclear whether this interaction is direct or indirect. Interacts with EML3 (phosphorylated at 'Thr-881'). As to expression, widely expressed. Expressed in pancreas, kidney, skeletal muscle, liver and heart. Weakly expressed in lung, brain and placenta.

It is found in the cytoplasm. The protein localises to the cytoskeleton. Its subcellular location is the microtubule organizing center. The protein resides in the centrosome. It localises to the spindle. It is found in the spindle pole. Functionally, contributes to mitotic spindle assembly, maintenance of centrosome integrity and completion of cytokinesis as part of the HAUS augmin-like complex. The sequence is that of HAUS augmin-like complex subunit 1 (HAUS1) from Homo sapiens (Human).